Here is a 95-residue protein sequence, read N- to C-terminus: Protein GOLVEN 9 (95 aa).

The N-terminal stretch at 1-24 (MKKTSLKLMTLVLGFCFVIYLLQG) is a signal peptide. Residues 25 to 73 (PRGGSRNGDLLIARKLISLEPIETKNAARSLKDSISTDLEEEVDRLMEH) constitute a propeptide that is removed on maturation. The segment at 72 to 95 (EHEYPSPVKPRKRTPVHNGVRNRH) is disordered. Position 75 is a sulfotyrosine (Tyr75). Positions 80–95 (KPRKRTPVHNGVRNRH) are enriched in basic residues. Pro86 is modified (hydroxyproline). Positions 90–95 (GVRNRH) are excised as a propeptide.

It belongs to the RGF family. Binds to LRR receptor-like serine/threonine-protein kinases to trigger their dimerization with SERK proteins and subsequent signaling. As to expression, expressed in roots.

The protein resides in the secreted. Its function is as follows. Signaling peptide (root growth factor) required during root gravitropism in a PIN2-traffic dependent manner. Regulates the pattern of root growth and lateral root development by modulating the length and the number of cortical cells in the root apical meristem (RAM), and the anticlinal asymmetric cell divisions in lateral root initiation cells. The polypeptide is Protein GOLVEN 9 (Arabidopsis thaliana (Mouse-ear cress)).